The following is a 319-amino-acid chain: ATP-dependent 6-phosphofructokinase (319 aa).

Gly-11 contacts ATP. 21–25 (RAVVR) serves as a coordination point for ADP. Residues 72–73 (RC) and 102–105 (GDGS) each bind ATP. Position 103 (Asp-103) interacts with Mg(2+). A substrate-binding site is contributed by 125–127 (TID). The active-site Proton acceptor is Asp-127. Arg-154 is an ADP binding site. Residues Arg-162 and 169–171 (MGR) each bind substrate. ADP contacts are provided by residues 185–187 (GAE), Arg-211, and 213–215 (KKH). Substrate contacts are provided by residues Glu-222, Arg-243, and 249–252 (HVQR).

It belongs to the phosphofructokinase type A (PFKA) family. ATP-dependent PFK group I subfamily. Prokaryotic clade 'B1' sub-subfamily. In terms of assembly, homotetramer. Mg(2+) is required as a cofactor.

It localises to the cytoplasm. The catalysed reaction is beta-D-fructose 6-phosphate + ATP = beta-D-fructose 1,6-bisphosphate + ADP + H(+). It participates in carbohydrate degradation; glycolysis; D-glyceraldehyde 3-phosphate and glycerone phosphate from D-glucose: step 3/4. With respect to regulation, allosterically activated by ADP and other diphosphonucleosides, and allosterically inhibited by phosphoenolpyruvate. Functionally, catalyzes the phosphorylation of D-fructose 6-phosphate to fructose 1,6-bisphosphate by ATP, the first committing step of glycolysis. The sequence is that of ATP-dependent 6-phosphofructokinase from Bacillus cereus (strain ATCC 14579 / DSM 31 / CCUG 7414 / JCM 2152 / NBRC 15305 / NCIMB 9373 / NCTC 2599 / NRRL B-3711).